The chain runs to 207 residues: Redox-sensing transcriptional repressor Rex (207 aa).

The H-T-H motif DNA-binding region spans 15–54 (LYYRCLNRLYEEGIEYVASKDIAERLGIKSSQVRKDLSYF). 89–94 (GAGNIG) contacts NAD(+).

The protein belongs to the transcriptional regulatory Rex family. In terms of assembly, homodimer.

Its subcellular location is the cytoplasm. Its function is as follows. Modulates transcription in response to changes in cellular NADH/NAD(+) redox state. In Thermosipho africanus (strain TCF52B), this protein is Redox-sensing transcriptional repressor Rex.